Here is a 90-residue protein sequence, read N- to C-terminus: Probable Fe(2+)-trafficking protein (90 aa).

Belongs to the Fe(2+)-trafficking protein family. As to quaternary structure, monomer.

Functionally, could be a mediator in iron transactions between iron acquisition and iron-requiring processes, such as synthesis and/or repair of Fe-S clusters in biosynthetic enzymes. This is Probable Fe(2+)-trafficking protein from Yersinia pestis bv. Antiqua (strain Antiqua).